Consider the following 352-residue polypeptide: Phosphoribosylformylglycinamidine cyclo-ligase (352 aa).

The protein belongs to the AIR synthase family.

The protein localises to the cytoplasm. It catalyses the reaction 2-formamido-N(1)-(5-O-phospho-beta-D-ribosyl)acetamidine + ATP = 5-amino-1-(5-phospho-beta-D-ribosyl)imidazole + ADP + phosphate + H(+). It functions in the pathway purine metabolism; IMP biosynthesis via de novo pathway; 5-amino-1-(5-phospho-D-ribosyl)imidazole from N(2)-formyl-N(1)-(5-phospho-D-ribosyl)glycinamide: step 2/2. The polypeptide is Phosphoribosylformylglycinamidine cyclo-ligase (Teredinibacter turnerae (strain ATCC 39867 / T7901)).